The sequence spans 304 residues: Quinolinate synthase (304 aa).

Residues H23 and S40 each coordinate iminosuccinate. Residue C85 coordinates [4Fe-4S] cluster. Residues 111 to 113 (YVN) and S128 each bind iminosuccinate. Residue C171 participates in [4Fe-4S] cluster binding. Residues 197–199 (HPE) and T214 contribute to the iminosuccinate site. Position 259 (C259) interacts with [4Fe-4S] cluster.

This sequence belongs to the quinolinate synthase family. Type 2 subfamily. The cofactor is [4Fe-4S] cluster.

The protein resides in the cytoplasm. It carries out the reaction iminosuccinate + dihydroxyacetone phosphate = quinolinate + phosphate + 2 H2O + H(+). The protein operates within cofactor biosynthesis; NAD(+) biosynthesis; quinolinate from iminoaspartate: step 1/1. Functionally, catalyzes the condensation of iminoaspartate with dihydroxyacetone phosphate to form quinolinate. The chain is Quinolinate synthase from Pelobacter propionicus (strain DSM 2379 / NBRC 103807 / OttBd1).